The primary structure comprises 569 residues: DNA-binding protein eta2 (569 aa).

Disordered regions lie at residues 1-26 and 133-159; these read MMLA…TLSC and KRKI…AKKR. Over residues 9–26 the composition is skewed to polar residues; sequence INENQGTRSNLESPTLSC. Ser21 bears the Phosphoserine mark. 2 Myb-like domains span residues 322-371 and 377-459; these read LDPK…RFVV and ETID…EKTI. The segment at 459–487 is disordered; it reads IASYSSNQRQEEDQGKKRKKRKKKKSKGK. Residues 474–487 show a composition bias toward basic residues; sequence KKRKKRKKKKSKGK.

The protein localises to the nucleus. This chain is DNA-binding protein eta2 (eta2), found in Schizosaccharomyces pombe (strain 972 / ATCC 24843) (Fission yeast).